Here is a 40-residue protein sequence, read N- to C-terminus: Natriuretic peptide HsNP-b (40 aa).

The propeptide occupies 1–8 (SGSKTAKI). The segment at 1-40 (SGSKTAKIGDGCFGVPIDHIGSTTDLGCGRPRPKPTPRGS) is disordered. A disulfide bridge connects residues cysteine 12 and cysteine 28. Over residues 31 to 40 (PRPKPTPRGS) the composition is skewed to basic residues.

It belongs to the natriuretic peptide family. Expressed by the venom gland.

It localises to the secreted. Snake venom natriuretic peptide that targets both NPR1 and NPR2. Exhibits hypotensive and vasodepressor activities. The protein is Natriuretic peptide HsNP-b of Hoplocephalus stephensii (Stephens's banded snake).